Consider the following 977-residue polypeptide: Kinesin-like protein KIN-7L, chloroplastic (977 aa).

Residues 1 to 12 (MGSKQVSKTRNG) show a composition bias toward polar residues. Residues 1 to 66 (MGSKQVSKTR…PPKPLQSKEN (66 aa)) form a disordered region. 2 stretches are compositionally biased toward low complexity: residues 22-31 (SSASSTTSSS) and 38-54 (SVDS…RSKP). Positions 66–385 (NVTVTVRFRP…LKFAHRAKHI (320 aa)) constitute a Kinesin motor domain. 146-153 (GVTSSGKT) is an ATP binding site. Positions 386–471 (EIQAAQNKII…LTKLILVSNK (86 aa)) form a coiled coil. Positions 549-589 (DSSLGGSSLSDKSSAVKSNSTPSTPQGEGSDFHTESRLSEG) are disordered. The span at 551 to 561 (SLGGSSLSDKS) shows a compositional bias: low complexity. Positions 563 to 575 (AVKSNSTPSTPQG) are enriched in polar residues. 2 coiled-coil regions span residues 626 to 688 (MEIL…GKQI) and 732 to 942 (IQEQ…LENE). The span at 864-876 (SSVTTPQGKTGNL) shows a compositional bias: polar residues. Disordered stretches follow at residues 864–891 (SSVT…KEQE) and 958–977 (AANS…HFGT). Residues 879-891 (GRRESVSKRKEQE) show a composition bias toward basic and acidic residues. Residues 958-967 (AANSGLSDSV) are compositionally biased toward polar residues. Residues 968-977 (SETRIEHFGT) show a composition bias toward basic and acidic residues.

Belongs to the TRAFAC class myosin-kinesin ATPase superfamily. Kinesin family. KIN-7 subfamily.

It is found in the plastid. It localises to the chloroplast. The sequence is that of Kinesin-like protein KIN-7L, chloroplastic from Arabidopsis thaliana (Mouse-ear cress).